We begin with the raw amino-acid sequence, 200 residues long: Oligoribonuclease (200 aa).

Positions 5–169 constitute an Exonuclease domain; the sequence is MVWIDCEMTG…ADIRESIAEL (165 aa). Tyr-126 is a catalytic residue.

This sequence belongs to the oligoribonuclease family.

The protein resides in the cytoplasm. Functionally, 3'-to-5' exoribonuclease specific for small oligoribonucleotides. The polypeptide is Oligoribonuclease (Streptomyces coelicolor (strain ATCC BAA-471 / A3(2) / M145)).